The sequence spans 302 residues: tRNA-cytidine(32) 2-sulfurtransferase (302 aa).

The PP-loop motif motif lies at 44-49; that stretch reads SGGKDS. Residues C119, C122, and C210 each contribute to the [4Fe-4S] cluster site.

Belongs to the TtcA family. Homodimer. Mg(2+) is required as a cofactor. It depends on [4Fe-4S] cluster as a cofactor.

The protein resides in the cytoplasm. It catalyses the reaction cytidine(32) in tRNA + S-sulfanyl-L-cysteinyl-[cysteine desulfurase] + AH2 + ATP = 2-thiocytidine(32) in tRNA + L-cysteinyl-[cysteine desulfurase] + A + AMP + diphosphate + H(+). It functions in the pathway tRNA modification. Catalyzes the ATP-dependent 2-thiolation of cytidine in position 32 of tRNA, to form 2-thiocytidine (s(2)C32). The sulfur atoms are provided by the cysteine/cysteine desulfurase (IscS) system. This Teredinibacter turnerae (strain ATCC 39867 / T7901) protein is tRNA-cytidine(32) 2-sulfurtransferase.